The sequence spans 508 residues: uncharacterized protein (508 aa).

The protein resides in the virion. This is an uncharacterized protein from Acanthamoeba polyphaga mimivirus (APMV).